Consider the following 184-residue polypeptide: MSYGCQVSDDEPNGSKAVSLLLRLSTLALALTSAVVMATASECTVVQLNGVVATITYKDFPPFVYLVGFNIAAAMLEAAAIYLRLSTGGGDDDDEGFKGKLPGILLVVIDVAVQALVYTATGGAFAAVSAYGPQINACGAGAGRFCGQVHQSKLLSFAGSAAVGLAVVFRDVSLPFSLWPTSSD.

At 1–16 (MSYGCQVSDDEPNGSK) the chain is on the cytoplasmic side. Residues 17–37 (AVSLLLRLSTLALALTSAVVM) form a helical membrane-spanning segment. The Extracellular segment spans residues 38–62 (ATASECTVVQLNGVVATITYKDFPP). The chain crosses the membrane as a helical span at residues 63 to 83 (FVYLVGFNIAAAMLEAAAIYL). The Cytoplasmic portion of the chain corresponds to 84 to 100 (RLSTGGGDDDDEGFKGK). The chain crosses the membrane as a helical span at residues 101–121 (LPGILLVVIDVAVQALVYTAT). Over 122-153 (GGAFAAVSAYGPQINACGAGAGRFCGQVHQSK) the chain is Extracellular. A helical membrane pass occupies residues 154–174 (LLSFAGSAAVGLAVVFRDVSL). The Cytoplasmic portion of the chain corresponds to 175–184 (PFSLWPTSSD).

It belongs to the Casparian strip membrane proteins (CASP) family. Homodimer and heterodimers.

The protein localises to the cell membrane. The protein is CASP-like protein 1U2 of Oryza sativa subsp. japonica (Rice).